The sequence spans 322 residues: Ferredoxin--NADP reductase (322 aa).

FAD contacts are provided by aspartate 34, glutamine 42, tyrosine 47, valine 87, phenylalanine 120, aspartate 279, and threonine 320.

Belongs to the ferredoxin--NADP reductase type 2 family. As to quaternary structure, homodimer. FAD serves as cofactor.

It carries out the reaction 2 reduced [2Fe-2S]-[ferredoxin] + NADP(+) + H(+) = 2 oxidized [2Fe-2S]-[ferredoxin] + NADPH. The polypeptide is Ferredoxin--NADP reductase (Streptococcus pneumoniae serotype 19F (strain G54)).